The chain runs to 834 residues: Unextended protein (834 aa).

The signal sequence occupies residues 1 to 20 (MNTYFISFITIIIFANGING). Topologically, residues 21–182 (TSVDTSNKLL…DFLKIKTFEP (162 aa)) are extracellular. Residues Asn38, Asn42, and Asn156 are each glycosylated (N-linked (GlcNAc...) asparagine). The 180-residue stretch at 182–361 (PLIPVWLAII…NDVNDLDKNE (180 aa)) folds into the CNNM transmembrane domain. Residues 183–203 (LIPVWLAIIIIVTCLGFSALF) form a helical membrane-spanning segment. The Cytoplasmic segment spans residues 204–244 (SGLNLGLMSMDRTELKILRNTGTEKEKKYASKIAPVRDQGN). Residues 245–265 (YLLCSILLGNVLVNSTFTILL) traverse the membrane as a helical segment. The Extracellular segment spans residues 266-267 (DG). Residues 268 to 288 (LTSGLFAVIFSTLAIVLFGEI) form a helical membrane-spanning segment. The Cytoplasmic portion of the chain corresponds to 289–298 (TPQAVCSRHG). The chain crosses the membrane as a helical span at residues 299 to 319 (LAIGAKTILVTKTVMAITAPL). At 320–834 (SYPVSRILDK…DKFESKQSKP (515 aa)) the chain is on the extracellular side. CBS domains lie at 380–441 (MTHI…NTPL) and 448–515 (YQNP…IVDE). N-linked (GlcNAc...) asparagine glycosylation is present at Asn522. 604–656 (YIFTQGKAVDFFVLILEGRVEVTIGKEALMFESGPFTYFGTQALVPNVVIDSP) contacts a nucleoside 3',5'-cyclic phosphate. Residues 739 to 765 (CFAQNQSTRRLSNRSINSSPTNMNRSP) form a disordered region. Residues 740 to 763 (FAQNQSTRRLSNRSINSSPTNMNR) show a composition bias toward polar residues. 3 N-linked (GlcNAc...) asparagine glycosylation sites follow: Asn743, Asn751, and Asn790. A disordered region spans residues 807–834 (SGEQDTTAASMPLLPKLDDKFESKQSKP). The segment covering 822–834 (KLDDKFESKQSKP) has biased composition (basic and acidic residues).

This sequence belongs to the ACDP family. As to quaternary structure, interacts with PRL-1, possibly at the plasma membrane.

The protein localises to the cell membrane. In terms of biological role, probable metal transporter. Acts downstream of PRL-1 and protects the nervous system against olfactory carbon dioxide stimulation. This chain is Unextended protein, found in Drosophila melanogaster (Fruit fly).